Consider the following 298-residue polypeptide: MTSIAAPQPGLLRQYLVLTKPRVTQLAVFCAVIGMFLAVPGLPDLKRVLFGTIGIWLLAAAAFAINCLIEQEIDARMTRTARRGTARGTISPAQVLSLSGLLGGAGMLVLYHLVNPLTMWLTFATFVGYAVIYTVILKPRTPQNIVIGGLSGAMPPALGWASVANAVPAEAWVLVLIIFIWTPPHFWALALYRTEDYRKAGLPMLPITHGSKHTRLQIMLYSFALFAVTLLPYFMHMNGLLYLLAAVILGGIFVAHALRLYRSYSDERSRRLFRYSILYLALLFGALLVDHWVGVLSA.

The next 8 helical transmembrane spans lie at 23 to 43 (VTQL…PGLP), 49 to 69 (LFGT…NCLI), 95 to 115 (VLSL…HLVN), 117 to 137 (LTMW…TVIL), 144 to 164 (NIVI…ASVA), 171 to 191 (AWVL…ALAL), 234 to 254 (FMHM…GIFV), and 276 to 296 (SILY…VGVL).

The protein belongs to the UbiA prenyltransferase family. Protoheme IX farnesyltransferase subfamily.

Its subcellular location is the cell inner membrane. It catalyses the reaction heme b + (2E,6E)-farnesyl diphosphate + H2O = Fe(II)-heme o + diphosphate. It functions in the pathway porphyrin-containing compound metabolism; heme O biosynthesis; heme O from protoheme: step 1/1. Functionally, converts heme B (protoheme IX) to heme O by substitution of the vinyl group on carbon 2 of heme B porphyrin ring with a hydroxyethyl farnesyl side group. The polypeptide is Protoheme IX farnesyltransferase (Bordetella avium (strain 197N)).